The sequence spans 808 residues: uncharacterized protein (808 aa).

Residue 35–42 coordinates ATP; the sequence is GPNNVGKT.

This is an uncharacterized protein from Methanocaldococcus jannaschii (strain ATCC 43067 / DSM 2661 / JAL-1 / JCM 10045 / NBRC 100440) (Methanococcus jannaschii).